The chain runs to 236 residues: Adenosine 5'-phosphosulfate reductase (236 aa).

[4Fe-4S] cluster-binding residues include cysteine 123, cysteine 124, cysteine 206, and cysteine 209. Catalysis depends on cysteine 232, which acts as the Nucleophile; cysteine thiosulfonate intermediate.

It belongs to the PAPS reductase family. CysH subfamily. The cofactor is [4Fe-4S] cluster.

The protein localises to the cytoplasm. The enzyme catalyses [thioredoxin]-disulfide + sulfite + AMP + 2 H(+) = adenosine 5'-phosphosulfate + [thioredoxin]-dithiol. Its pathway is sulfur metabolism; hydrogen sulfide biosynthesis; sulfite from sulfate. Catalyzes the formation of sulfite from adenosine 5'-phosphosulfate (APS) using thioredoxin as an electron donor. The chain is Adenosine 5'-phosphosulfate reductase from Streptomyces coelicolor (strain ATCC BAA-471 / A3(2) / M145).